The sequence spans 399 residues: L-asparaginase-like protein GG20738 (399 aa).

A signal peptide spans 1-22; that stretch reads MLAQSCCLRLLILLLLCKSTCS. Disulfide bonds link cysteine 90–cysteine 95, cysteine 189–cysteine 205, and cysteine 344–cysteine 371.

It belongs to the Ntn-hydrolase family.

The chain is L-asparaginase-like protein GG20738 from Drosophila erecta (Fruit fly).